Reading from the N-terminus, the 364-residue chain is MKALILVGGFGTRLRPLTLTLPKPLVEFGNRPMILHQVESLAAAGVTDIVLAVNYRPDVMVSALKKYEEQYNVKIEFSVETEPLGTAGPLKLAESILAKDDSPFFVLNSDVICDYPFQQLAEFHKRHGDEGTIVVTKVDEPSKYGVVVHKPNHPSRIDRFVEKPVEFVGNRINAGMYILNPSVLKRIELRPTSIEQETFPAIVRDGQLHSFDLEGFWMDVGQPKDFLTGTCLYLTSLTKRNSKLLAPNSEPYVYGGNVMVDPTAKIGKNCRIGPNVVIGPNVVIGDGVRLQRCVLMENSKVKDHAWIKSTIVGWNSSVGRWARLENVTVLGDDVTIADEVYVNGGSILPHKSIKQNIDVPAIIM.

Belongs to the transferase hexapeptide repeat family.

The protein resides in the cytoplasm. It catalyses the reaction alpha-D-mannose 1-phosphate + GTP + H(+) = GDP-alpha-D-mannose + diphosphate. It participates in nucleotide-sugar biosynthesis; GDP-alpha-D-mannose biosynthesis; GDP-alpha-D-mannose from alpha-D-mannose 1-phosphate (GTP route): step 1/1. Its function is as follows. Involved in cell wall synthesis where it is required for glycosylation. Involved in cell cycle progression through cell-size checkpoint. This Emericella nidulans (strain FGSC A4 / ATCC 38163 / CBS 112.46 / NRRL 194 / M139) (Aspergillus nidulans) protein is Mannose-1-phosphate guanyltransferase (mpg1).